The primary structure comprises 432 residues: Amino-acid acetyltransferase (432 aa).

Residues 286–425 (ELVREAAIED…ASLYNFQRNS (140 aa)) enclose the N-acetyltransferase domain.

It belongs to the acetyltransferase family. ArgA subfamily.

The protein resides in the cytoplasm. It catalyses the reaction L-glutamate + acetyl-CoA = N-acetyl-L-glutamate + CoA + H(+). Its pathway is amino-acid biosynthesis; L-arginine biosynthesis; N(2)-acetyl-L-ornithine from L-glutamate: step 1/4. In Pseudomonas syringae pv. tomato (strain ATCC BAA-871 / DC3000), this protein is Amino-acid acetyltransferase.